The following is a 772-amino-acid chain: Nudix hydrolase 3 (772 aa).

Over residues 1–14 (MAEEHFDVLTKSGE) the composition is skewed to basic and acidic residues. The disordered stretch occupies residues 1 to 25 (MAEEHFDVLTKSGEKTGVSKPRGEV). Positions 30 to 172 (DYHRAVHVWI…DPAYVPYDVN (143 aa)) constitute a Nudix hydrolase domain. A Nudix box motif is present at residues 69–90 (GHISAGDTSLLSAQRELEEELG). Residues E84 and E88 each coordinate Mg(2+).

Belongs to the Nudix hydrolase family. Mg(2+) serves as cofactor. Requires Mn(2+) as cofactor. Expressed in roots, stems and, at lower level, leaves.

Probably mediates the hydrolysis of some nucleoside diphosphate derivatives. In Arabidopsis thaliana (Mouse-ear cress), this protein is Nudix hydrolase 3 (NUDT3).